Reading from the N-terminus, the 828-residue chain is Periplasmic nitrate reductase (828 aa).

The segment at residues 1–33 (MKLSRRDFMKANAAVAAAAAAGLTIPTVVQAAA) is a signal peptide (tat-type signal). The region spanning 39–95 (IKWDKAPCRFCGTGCGVLVGTQNGRIVASQGDPEAAVNRGLSCIKGYFLPKIMYGKD) is the 4Fe-4S Mo/W bis-MGD-type domain. Cys-46, Cys-49, Cys-53, and Cys-81 together coordinate [4Fe-4S] cluster. Mo-bis(molybdopterin guanine dinucleotide)-binding positions include Lys-83, Gln-150, Asn-175, Cys-179, 212–219 (WGSNMAEM), 243–247 (STFEH), 262–264 (QTD), Met-372, Gln-376, Asn-482, 508–509 (SD), Lys-531, Asp-558, and 718–727 (TGRVLEHWHT). Phe-794 provides a ligand contact to substrate. Residues Asn-802 and Lys-819 each contribute to the Mo-bis(molybdopterin guanine dinucleotide) site.

This sequence belongs to the prokaryotic molybdopterin-containing oxidoreductase family. NasA/NapA/NarB subfamily. As to quaternary structure, component of the periplasmic nitrate reductase NapAB complex composed of NapA and NapB. The cofactor is [4Fe-4S] cluster. Mo-bis(molybdopterin guanine dinucleotide) is required as a cofactor. Predicted to be exported by the Tat system. The position of the signal peptide cleavage has not been experimentally proven.

It localises to the periplasm. The enzyme catalyses 2 Fe(II)-[cytochrome] + nitrate + 2 H(+) = 2 Fe(III)-[cytochrome] + nitrite + H2O. Catalytic subunit of the periplasmic nitrate reductase complex NapAB. Receives electrons from NapB and catalyzes the reduction of nitrate to nitrite. The polypeptide is Periplasmic nitrate reductase (Serratia proteamaculans (strain 568)).